Reading from the N-terminus, the 330-residue chain is MCSSIPSLREVFANDFRIGAAVNPVTLEAQQSLLIRHVNSLTAENHMKFEHLQPEEGRFTFDIAIKSSTSPFSSHGVRGHTLVWHNQTPSWVFQDSQGHFVGRDVLLERMKSHISTVVQRYKGKVYCWDVINEAVADEGSEWLRSSTWRQIIGDDFIQQAFLYAHEADPEALLFYNDYNECFPEKREKIYTLVKSLRDKGIPIHGIGMQAHWSLNRPTLDEIRAAIERYASLGVILHITELDISMFEFDDHRKDLAAPTNEMVERQAERYEQIFSLFKEYRDVIQNVTFWGIADDHTWLDHFPVQGRKNWPLLFDEQHNPKPAFWRVVNI.

A GH10 domain is found at 2–330; sequence CSSIPSLREV…KPAFWRVVNI (329 aa). Glutamate 133 (proton donor) is an active-site residue. Glutamate 240 serves as the catalytic Nucleophile.

It belongs to the glycosyl hydrolase 10 (cellulase F) family. Cytoplasmic xylanase subfamily.

Its subcellular location is the cytoplasm. It catalyses the reaction Endohydrolysis of (1-&gt;4)-beta-D-xylosidic linkages in xylans.. It participates in glycan degradation; xylan degradation. This Geobacillus stearothermophilus (Bacillus stearothermophilus) protein is Endo-1,4-beta-xylanase (xynA).